The sequence spans 275 residues: COP9 signalosome complex subunit 7a (275 aa).

Position 2 is an N-acetylserine (serine 2). The region spanning 2 to 159 is the PCI domain; sequence SAEVKVTGQN…QRLEVDYSIG (158 aa). A coiled-coil region spans residues 185 to 233; sequence LSGIEEQVSRANQHKEQQLGLKQQIESEVANLKKTIKVTTAAAAAATSQ. The disordered stretch occupies residues 228 to 275; that stretch reads AAATSQDPEQHLTELREPASGTNQRQPSKKASKGKGLRGSAKIWSKSN. Residues 235 to 244 are compositionally biased toward basic and acidic residues; that stretch reads PEQHLTELRE. A compositionally biased stretch (basic residues) spans 254–263; sequence PSKKASKGKG.

This sequence belongs to the CSN7/EIF3M family. CSN7 subfamily. Component of the CSN complex, composed of COPS1/GPS1, COPS2, COPS3, COPS4, COPS5, COPS6, COPS7 (COPS7A or COPS7B), COPS8 and COPS9. In the complex, it probably interacts directly with COPS1, COPS2, COPS4, COPS5, COPS6 and COPS8. Interacts with PMF1. Interacts with the translation initiation factor EIF3S6. Interacts with CK2 and PKD. Interacts directly with ID3. Phosphorylated by CK2 and PKD kinases.

The protein localises to the cytoplasm. Its subcellular location is the nucleus. Its function is as follows. Component of the COP9 signalosome complex (CSN), a complex involved in various cellular and developmental processes. The CSN complex is an essential regulator of the ubiquitin (Ubl) conjugation pathway by mediating the deneddylation of the cullin subunits of SCF-type E3 ligase complexes, leading to decrease the Ubl ligase activity of SCF-type complexes such as SCF, CSA or DDB2. The complex is also involved in phosphorylation of p53/TP53, JUN, I-kappa-B-alpha/NFKBIA, ITPK1 and IRF8/ICSBP, possibly via its association with CK2 and PKD kinases. CSN-dependent phosphorylation of TP53 and JUN promotes and protects degradation by the Ubl system, respectively. The polypeptide is COP9 signalosome complex subunit 7a (Cops7a) (Mus musculus (Mouse)).